The chain runs to 192 residues: UPF0312 protein plu2095 (192 aa).

A signal peptide spans 1-23 (MLKKTLLGLTAGALLLNASSALA).

Belongs to the UPF0312 family. Type 1 subfamily.

The protein localises to the periplasm. The polypeptide is UPF0312 protein plu2095 (Photorhabdus laumondii subsp. laumondii (strain DSM 15139 / CIP 105565 / TT01) (Photorhabdus luminescens subsp. laumondii)).